The primary structure comprises 101 residues: Biogenesis of lysosome-related organelles complex 1 subunit SNN1 (101 aa).

A coiled-coil region spans residues 62–100 (DSNEYKAQFKEVNNLQKRLQKITLRLKDLERRSSQLTTS).

Belongs to the SNAPIN family. Component of the biogenesis of lysosome-related organelles complex-1 (BLOC-1).

Its subcellular location is the endosome. In terms of biological role, component of the biogenesis of lysosome-related organelles complex-1 (BLOC-1), a complex involved in endosomal cargo sorting. The protein is Biogenesis of lysosome-related organelles complex 1 subunit SNN1 (SNN1) of Candida glabrata (strain ATCC 2001 / BCRC 20586 / JCM 3761 / NBRC 0622 / NRRL Y-65 / CBS 138) (Yeast).